The following is a 261-amino-acid chain: Ribosomal RNA small subunit methyltransferase J (261 aa).

S-adenosyl-L-methionine-binding positions include 101-102 (RD), 117-118 (ER), 153-154 (SS), and Asp-176.

The protein belongs to the methyltransferase superfamily. RsmJ family.

The protein resides in the cytoplasm. The enzyme catalyses guanosine(1516) in 16S rRNA + S-adenosyl-L-methionine = N(2)-methylguanosine(1516) in 16S rRNA + S-adenosyl-L-homocysteine + H(+). Its function is as follows. Specifically methylates the guanosine in position 1516 of 16S rRNA. In Vibrio cholerae serotype O1 (strain ATCC 39315 / El Tor Inaba N16961), this protein is Ribosomal RNA small subunit methyltransferase J.